A 162-amino-acid polypeptide reads, in one-letter code: NADH-quinone oxidoreductase subunit I (162 aa).

4Fe-4S ferredoxin-type domains lie at arginine 54–threonine 83 and serine 93–isoleucine 122. 8 residues coordinate [4Fe-4S] cluster: cysteine 63, cysteine 66, cysteine 69, cysteine 73, cysteine 102, cysteine 105, cysteine 108, and cysteine 112.

Belongs to the complex I 23 kDa subunit family. As to quaternary structure, NDH-1 is composed of 14 different subunits. Subunits NuoA, H, J, K, L, M, N constitute the membrane sector of the complex. The cofactor is [4Fe-4S] cluster.

It is found in the cell inner membrane. It catalyses the reaction a quinone + NADH + 5 H(+)(in) = a quinol + NAD(+) + 4 H(+)(out). NDH-1 shuttles electrons from NADH, via FMN and iron-sulfur (Fe-S) centers, to quinones in the respiratory chain. The immediate electron acceptor for the enzyme in this species is believed to be ubiquinone. Couples the redox reaction to proton translocation (for every two electrons transferred, four hydrogen ions are translocated across the cytoplasmic membrane), and thus conserves the redox energy in a proton gradient. The protein is NADH-quinone oxidoreductase subunit I of Francisella tularensis subsp. holarctica (strain FTNF002-00 / FTA).